Consider the following 958-residue polypeptide: Importin-13 (958 aa).

HEAT repeat units follow at residues 19–49 (ENVE…QAQV), 51–83 (PQAW…RSPA), 90–130 (PDQY…LSMM), 137–174 (AVAD…EFQT), 189–226 (LAQE…SWVQ), 231–263 (LMDC…NAIS), 271–320 (VNTL…ALLD), 325–367 (WQSF…DDIL), 370–433 (EPDK…YEML), 435–471 (AELL…FQSI), 482–517 (VVPG…WLAD), 519–553 (PVMI…CREC), 557–595 (LPPY…LLSA), 598–643 (VEEI…SNLF), 671–711 (PVVV…VKTL), 715–749 (FAPM…VHIF), 756–798 (FPPI…ALKR), 810–840 (VKAL…TELL), 855–888 (ENGK…FALN), and 892–926 (FSYL…QQIL). The Importin N-terminal domain maps to 40-106 (AQKWLMQAQV…KSQLFTHITR (67 aa)).

Belongs to the importin beta family.

The protein resides in the cytoplasm. It localises to the nucleus. In terms of biological role, functions in nuclear protein import as nuclear transport receptor. Serves as receptor for nuclear localization signals (NLS) in cargo substrates. Is thought to mediate docking of the importin/substrate complex to the nuclear pore complex (NPC) through binding to nucleoporin and the complex is subsequently translocated through the pore by an energy requiring, Ran-dependent mechanism. At the nucleoplasmic side of the NPC, Ran binds to the importin, the importin/substrate complex dissociates and importin is re-exported from the nucleus to the cytoplasm where GTP hydrolysis releases Ran. The directionality of nuclear import is thought to be conferred by an asymmetric distribution of the GTP- and GDP-bound forms of Ran between the cytoplasm and nucleus. This chain is Importin-13 (IPO13), found in Gallus gallus (Chicken).